We begin with the raw amino-acid sequence, 55 residues long: Small ribosomal subunit protein eS31 (55 aa).

Zn(2+)-binding residues include Cys26, Cys29, Cys44, and Cys47.

The protein belongs to the eukaryotic ribosomal protein eS31 family. Part of the 30S ribosomal subunit. Zn(2+) serves as cofactor.

The chain is Small ribosomal subunit protein eS31 from Archaeoglobus fulgidus (strain ATCC 49558 / DSM 4304 / JCM 9628 / NBRC 100126 / VC-16).